Here is a 220-residue protein sequence, read N- to C-terminus: Ribosomal RNA large subunit methyltransferase E (220 aa).

Gly60, Trp62, Asp92, Asp108, and Asp133 together coordinate S-adenosyl-L-methionine. Residue Lys173 is the Proton acceptor of the active site. The segment at 197 to 220 (RKPKASRDKSSETFILGRQLKQPR) is disordered.

It belongs to the class I-like SAM-binding methyltransferase superfamily. RNA methyltransferase RlmE family.

It is found in the cytoplasm. It carries out the reaction uridine(2552) in 23S rRNA + S-adenosyl-L-methionine = 2'-O-methyluridine(2552) in 23S rRNA + S-adenosyl-L-homocysteine + H(+). Specifically methylates the uridine in position 2552 of 23S rRNA at the 2'-O position of the ribose in the fully assembled 50S ribosomal subunit. The sequence is that of Ribosomal RNA large subunit methyltransferase E from Burkholderia ambifaria (strain MC40-6).